Consider the following 483-residue polypeptide: UDP-N-acetylmuramoyl-L-alanyl-D-glutamate--2,6-diaminopimelate ligase (483 aa).

A UDP-N-acetyl-alpha-D-muramoyl-L-alanyl-D-glutamate-binding site is contributed by Ser29. 107–113 is a binding site for ATP; the sequence is GTSGKTS. UDP-N-acetyl-alpha-D-muramoyl-L-alanyl-D-glutamate-binding positions include 149–150, Ser176, Gln182, and Arg184; that span reads TT. The residue at position 216 (Lys216) is an N6-carboxylysine. Meso-2,6-diaminopimelate contacts are provided by residues Arg380, 404–407, Gly452, and Glu456; that span reads DNPR. Positions 404–407 match the Meso-diaminopimelate recognition motif motif; that stretch reads DNPR.

The protein belongs to the MurCDEF family. MurE subfamily. Mg(2+) serves as cofactor. In terms of processing, carboxylation is probably crucial for Mg(2+) binding and, consequently, for the gamma-phosphate positioning of ATP.

The protein resides in the cytoplasm. It catalyses the reaction UDP-N-acetyl-alpha-D-muramoyl-L-alanyl-D-glutamate + meso-2,6-diaminopimelate + ATP = UDP-N-acetyl-alpha-D-muramoyl-L-alanyl-gamma-D-glutamyl-meso-2,6-diaminopimelate + ADP + phosphate + H(+). It participates in cell wall biogenesis; peptidoglycan biosynthesis. Its function is as follows. Catalyzes the addition of meso-diaminopimelic acid to the nucleotide precursor UDP-N-acetylmuramoyl-L-alanyl-D-glutamate (UMAG) in the biosynthesis of bacterial cell-wall peptidoglycan. This chain is UDP-N-acetylmuramoyl-L-alanyl-D-glutamate--2,6-diaminopimelate ligase, found in Chelativorans sp. (strain BNC1).